The following is an 845-amino-acid chain: Complement component C7 (845 aa).

Residues 1 to 22 form the signal peptide; it reads MQVTSLLILVCFIAAFQVFSRA. The 54-residue stretch at 27-80 folds into the TSP type-1 1 domain; the sequence is NCKWDSYGPWSECNGCTKTQTRRRSVAVYGQYGGYPCEGSAFETQSCKPERGCP. Intrachain disulfides connect Cys28–Cys63, Cys39–Cys73, Cys42–Cys79, Cys85–Cys96, Cys91–Cys109, and Cys103–Cys119. The LDL-receptor class A domain maps to 84 to 120; sequence GCGDRFRCFSGQCISKSLVCNGDPDCEEDGADEDKCE. The MACPF domain maps to 122 to 456; sequence VANPSCNIDK…EYFDEFDPCH (335 aa). The N-linked (GlcNAc...) asparagine glycan is linked to Asn124. Cys127 and Cys164 are oxidised to a cystine. Asn201 carries an N-linked (GlcNAc...) asparagine glycan. Cystine bridges form between Cys336/Cys353, Cys433/Cys560, Cys455/Cys505, Cys457/Cys473, Cys460/Cys475, Cys477/Cys486, Cys512/Cys545, Cys523/Cys535, Cys571/Cys613, Cys599/Cys626, Cys631/Cys673, Cys659/Cys688, Cys703/Cys714, Cys716/Cys751, Cys722/Cys744, Cys729/Cys764, Cys774/Cys783, Cys777/Cys790, Cys792/Cys826, Cys798/Cys819, and Cys806/Cys839. Residues 457–487 form the EGF-like domain; sequence CRPCQNGGLAIVVETQCQCLCKPYTFGSACE. The region spanning 500 to 549 is the TSP type-1 2 domain; the sequence is DGGWNCWSSWSPCVQGKRTRSRECNNPPPRDDGKSCLGETTESKQCEDQD. CCP stretches follow at residues 545–615 and 616–693; these read CEDQ…RCGE and DLQW…QKAT. 2 consecutive Sushi domains span residues 569–628 and 629–690; these read EFCL…HCQK and LACV…KCVQ. 2 factor I module (FIM) regions span residues 695-771 and 772-844; these read TPPP…SPAE and KVCG…EEAA. Asn755 is a glycosylation site (N-linked (GlcNAc...) asparagine).

It belongs to the complement C6/C7/C8/C9 family. Monomer or dimer; as a C5b-7 complex it can also form multimeric rosettes. Component of the membrane attack complex (MAC), composed of complement C5b, C6, C7, C8A, C8B, C8G and multiple copies of the pore-forming subunit C9. C-, N- and O-glycosylated. O-glycosylated with core 1 or possibly core 8 glycans.

The protein localises to the secreted. Its subcellular location is the target cell membrane. With respect to regulation, membrane attack complex (MAC) assembly is inhibited by CD59, thereby protecting self-cells from damage during complement activation. MAC assembly is also inhibited by clusterin (CLU) chaperones that inhibit polymerization of C9. Its function is as follows. Component of the membrane attack complex (MAC), a multiprotein complex activated by the complement cascade, which inserts into a target cell membrane and forms a pore, leading to target cell membrane rupture and cell lysis. The MAC is initiated by proteolytic cleavage of C5 into complement C5b in response to the classical, alternative, lectin and GZMK complement pathways. The complement pathways consist in a cascade of proteins that leads to phagocytosis and breakdown of pathogens and signaling that strengthens the adaptive immune system. C7 serves as a membrane anchor. During MAC assembly, associates with C5b and C6 to form the C5b-7 complex, a key lipophilic precursor of the MAC complex, which associates with the outer leaflet and reduces the energy for membrane bending. The chain is Complement component C7 from Mus musculus (Mouse).